Reading from the N-terminus, the 554-residue chain is Glucose-6-phosphate isomerase (554 aa).

Glu359 serves as the catalytic Proton donor. Residues His390 and Lys518 contribute to the active site.

The protein belongs to the GPI family.

The protein resides in the cytoplasm. It carries out the reaction alpha-D-glucose 6-phosphate = beta-D-fructose 6-phosphate. It participates in carbohydrate biosynthesis; gluconeogenesis. Its pathway is carbohydrate degradation; glycolysis; D-glyceraldehyde 3-phosphate and glycerone phosphate from D-glucose: step 2/4. In terms of biological role, catalyzes the reversible isomerization of glucose-6-phosphate to fructose-6-phosphate. This chain is Glucose-6-phosphate isomerase, found in Pseudomonas entomophila (strain L48).